Here is a 237-residue protein sequence, read N- to C-terminus: Protein ULTRAPETALA 1 (237 aa).

The SAND domain occupies 18-116 (EELQEMSGVN…SKTVLLKYYN (99 aa)). The CW-type zinc finger occupies 133–191 (VCHRDEFVGCNDCGKERRFRLRSRDECRLHHNAMGDPNWKCSDFPYDKITCEEEEERGS).

In terms of assembly, interacts with HHO5. Associates with ATX1 for trimethylating 'Lys-4' on histone H3 (H3K4me3) at flower MADS box gene loci. Expressed at low levels in seedlings, roots, shoots, leaves, stems, inflorescences, pollen, flowers and siliques, with highest levels dividing tissues including inflorescence.

It localises to the cytoplasm. It is found in the nucleus. In terms of biological role, putative transcription factor that acts as a key negative regulator of cell accumulation in shoot and floral meristems. Negatively regulates the size of the WUSCHEL (WUS)-expressing organizing center in inflorescence meristems. May act by down-regulating expression of WUS. Acts as an antirepressor that counteracts EMF1 action through modulation of trimethylated 'Lys-4' on histone H3 (H3K4me3) marks on target gene loci (including genes involved in salt stress response and flower development). Collaboratively with RBL and CYP40/SQN, influences floral meristem (FM) determinacy in an AGAMOUS and SUPERMAN-dependent manner, thus contributing to the floral developmental homeostasis. This chain is Protein ULTRAPETALA 1, found in Arabidopsis thaliana (Mouse-ear cress).